A 339-amino-acid polypeptide reads, in one-letter code: MKKTIKNSTHRPEDILVHAIKKRRSASGDVKNAVKLKEGEDYLRVEEEIPHDDNVVVIDDGCDHDHDVDDNDDDEEENGRYCRREFDHGYHLVKGQMGHGMEDFIVADTKTVKGHNLGLYAIFDGHSGSDVADYLQNHLFDNILSQPDFWRNPKKAIKRAYKSTDDYILQNVVGPRGGSTAVTAIVIDGKKIVVANVGDSRAILCRESDVVKQITVDHEPDKERDLVKSKGGFVSQKPGNVPRVDGQLAMTRAFGDGGLKEHISVIPNIEIAEIHDDTKFLILASDGLWKVMSNDEVWDQIKKRGNAEEAAKMLIDKALARGSKDDISCVVVSFLQWID.

Residues 87–334 (DHGYHLVKGQ…DDISCVVVSF (248 aa)) form the PPM-type phosphatase domain. Mn(2+) is bound by residues D124, G125, D286, and D325.

It belongs to the PP2C family. It depends on Mg(2+) as a cofactor. Mn(2+) is required as a cofactor.

It catalyses the reaction O-phospho-L-seryl-[protein] + H2O = L-seryl-[protein] + phosphate. The catalysed reaction is O-phospho-L-threonyl-[protein] + H2O = L-threonyl-[protein] + phosphate. The sequence is that of Probable protein phosphatase 2C 28 from Arabidopsis thaliana (Mouse-ear cress).